A 552-amino-acid polypeptide reads, in one-letter code: Mothers against decapentaplegic homolog 4 (552 aa).

The segment at 1 to 322 is mediates interaction with ZBTB7A; it reads MDNMSITNTP…PISNHPAPEY (322 aa). An MH1 domain is found at 18 to 142; that stretch reads SIVHSLMCHR…YERVVSPGID (125 aa). Lysine 37 is subject to N6-acetyllysine. The interval 44-69 is required for interaction with TSC22D1; that stretch reads VKKLKEKKDELDSLITAITTNGAHPS. Cysteine 71 is a Zn(2+) binding site. Lysine 113 is covalently cross-linked (Glycyl lysine isopeptide (Lys-Gly) (interchain with G-Cter in SUMO2)). Zn(2+) is bound by residues cysteine 115, cysteine 127, and histidine 132. 2 disordered regions span residues 168 to 194 and 236 to 256; these read GQPSLSTEGHSIQTIQHPPSNRASTET and GLLQIASGPQPGQQQNGFTGQ. 2 stretches are compositionally biased toward polar residues: residues 170 to 194 and 245 to 256; these read PSLSTEGHSIQTIQHPPSNRASTET and QPGQQQNGFTGQ. Residues 275–320 are SAD; the sequence is PYTPNLPHHQNGHLQHHPPMPPHPGHYWPVHNELAFQPPISNHPAP. Residues 323 to 552 enclose the MH2 domain; it reads WCSIAYFEMD…MPIADPQPLD (230 aa). Lysine 428 and lysine 507 each carry N6-acetyllysine. Residue lysine 519 forms a Glycyl lysine isopeptide (Lys-Gly) (interchain with G-Cter in ubiquitin) linkage.

Belongs to the dwarfin/SMAD family. As to quaternary structure, monomer; in the absence of TGF-beta activation. Heterotrimer; on TGF-beta activation. Heterotrimer composed of two molecules of a C-terminally phosphorylated R-SMAD molecule, SMAD2 or SMAD3, and one molecule of SMAD4 to form the transcriptional active SMAD2/SMAD3-SMAD4 complex. Found in a ternary complex composed of SMAD4, STK11/LKB1 and STK11IP. Found in a complex with SMAD1 and YY1. Identified in a complex that contains at least ZNF451, SMAD2, SMAD3 and SMAD4. Interacts with ATF2, COPS5, DACH1, MSG1, SKI, STK11/LKB1, STK11IP and TRIM33. Associates with ZNF423 or ZNF521 in response to BMP2 leading to activate transcription of BMP target genes. Interacts with USP9X. Interacts (via the MH1 and MH2 domains) with RBPMS. Interacts with WWTR1 (via coiled-coil domain). Interacts with CITED1 and CITED2. Interacts with PDPK1 (via PH domain). Interacts with VPS39; this interaction affects heterodimer formation with SMAD3, but not with SMAD2, and leads to inhibition of SMAD3-dependent transcription activation. Interactions with VPS39 and SMAD2 may be mutually exclusive. Interacts (via MH2 domain) with ZNF451 (via N-terminal zinc-finger domains). Interacts with ZC3H3. Interacts weakly with ZNF8. Interacts with NUP93 and IPO7; translocates SMAD4 to the nucleus through the NPC upon BMP7 stimulation resulting in activation of SMAD4 signaling. Interacts with CREB3L1, the interaction takes place upon TGFB1 induction and SMAD4 acts as a CREB3L1 coactivator to induce the expression of genes involved in the assembly of collagen extracellular matrix. Interacts with DLX1. Interacts with ZBTB7A; the interaction is direct and stimulated by TGFB1. Interacts with CREBBP; the recruitment of this transcriptional coactivator is negatively regulated by ZBTB7A. Interacts with EP300; the interaction with this transcriptional coactivator is negatively regulated by ZBTB7A. Interacts with HDAC1. Interacts (via MH2 domain) with ZMIZ1 (via SP-RING-type domain); in the TGF-beta signaling pathway increases the activity of the SMAD3/SMAD4 transcriptional complex. Interacts (via N-terminus) with TSC22D1. In terms of processing, phosphorylated by PDPK1. Post-translationally, monoubiquitinated on Lys-519 by E3 ubiquitin-protein ligase TRIM33. Monoubiquitination hampers its ability to form a stable complex with activated SMAD2/3 resulting in inhibition of TGF-beta/BMP signaling cascade. Deubiquitination by USP9X restores its competence to mediate TGF-beta signaling.

It localises to the cytoplasm. The protein localises to the nucleus. Its function is as follows. In muscle physiology, plays a central role in the balance between atrophy and hypertrophy. When recruited by MSTN, promotes atrophy response via phosphorylated SMAD2/4. MSTN decrease causes SMAD4 release and subsequent recruitment by the BMP pathway to promote hypertrophy via phosphorylated SMAD1/5/8. Acts synergistically with SMAD1 and YY1 in bone morphogenetic protein (BMP)-mediated cardiac-specific gene expression. Binds to SMAD binding elements (SBEs) (5'-GTCT/AGAC-3') within BMP response element (BMPRE) of cardiac activating regions. Common SMAD (co-SMAD) is the coactivator and mediator of signal transduction by TGF-beta (transforming growth factor). Component of the heterotrimeric SMAD2/SMAD3-SMAD4 complex that forms in the nucleus and is required for the TGF-mediated signaling. Promotes binding of the SMAD2/SMAD4/FAST-1 complex to DNA and provides an activation function required for SMAD1 or SMAD2 to stimulate transcription. Component of the multimeric SMAD3/SMAD4/JUN/FOS complex which forms at the AP1 promoter site; required for synergistic transcriptional activity in response to TGF-beta. May act as a tumor suppressor. Positively regulates PDPK1 kinase activity by stimulating its dissociation from the 14-3-3 protein YWHAQ which acts as a negative regulator. This is Mothers against decapentaplegic homolog 4 (SMAD4) from Homo sapiens (Human).